Here is a 125-residue protein sequence, read N- to C-terminus: Fluoride-specific ion channel FluC (125 aa).

4 helical membrane-spanning segments follow: residues 4 to 24, 35 to 55, 69 to 89, and 103 to 123; these read WLFV…ISEL, YGTL…FALI, LMVG…DTVV, and MGLN…LVAS. Gly-75 and Thr-78 together coordinate Na(+).

The protein belongs to the fluoride channel Fluc/FEX (TC 1.A.43) family.

It is found in the cell inner membrane. The enzyme catalyses fluoride(in) = fluoride(out). Na(+) is not transported, but it plays an essential structural role and its presence is essential for fluoride channel function. Functionally, fluoride-specific ion channel. Important for reducing fluoride concentration in the cell, thus reducing its toxicity. This Aeromonas salmonicida (strain A449) protein is Fluoride-specific ion channel FluC.